The following is a 450-amino-acid chain: Putative serine/threonine-protein kinase R517/R518 (450 aa).

Residues 9-290 form the Protein kinase domain; the sequence is KMTDTVLGKG…WSELFHHYWF (282 aa). ATP contacts are provided by residues 15 to 23 and Lys-38; that span reads LGKGGFSEV. The Proton acceptor role is filled by Asp-140.

It belongs to the protein kinase superfamily. Ser/Thr protein kinase family.

The enzyme catalyses L-seryl-[protein] + ATP = O-phospho-L-seryl-[protein] + ADP + H(+). The catalysed reaction is L-threonyl-[protein] + ATP = O-phospho-L-threonyl-[protein] + ADP + H(+). The protein is Putative serine/threonine-protein kinase R517/R518 of Acanthamoeba polyphaga mimivirus (APMV).